The sequence spans 130 residues: MTGNDPLANALSGVDNAESVGHLSHEIQPASNVIGSVLEVFYDRGYINGFEFVDDGKAGRFEVELSGGINECGAVKPRYSAGADEFERWEKRYLPARDYGALIVTTSHGVMSHYEARETGIGGQVIAYVY.

The protein belongs to the universal ribosomal protein uS8 family. As to quaternary structure, part of the 30S ribosomal subunit.

One of the primary rRNA binding proteins, it binds directly to 16S rRNA central domain where it helps coordinate assembly of the platform of the 30S subunit. This chain is Small ribosomal subunit protein uS8, found in Haloquadratum walsbyi (strain DSM 16790 / HBSQ001).